A 299-amino-acid chain; its full sequence is Acetylglutamate kinase (299 aa).

Substrate contacts are provided by residues glycine 72 to glycine 73, arginine 94, and asparagine 196.

This sequence belongs to the acetylglutamate kinase family. ArgB subfamily.

Its subcellular location is the cytoplasm. It carries out the reaction N-acetyl-L-glutamate + ATP = N-acetyl-L-glutamyl 5-phosphate + ADP. Its pathway is amino-acid biosynthesis; L-arginine biosynthesis; N(2)-acetyl-L-ornithine from L-glutamate: step 2/4. Catalyzes the ATP-dependent phosphorylation of N-acetyl-L-glutamate. This is Acetylglutamate kinase from Burkholderia cenocepacia (strain HI2424).